The following is an 86-amino-acid chain: Cell division topological specificity factor (86 aa).

It belongs to the MinE family.

Its function is as follows. Prevents the cell division inhibition by proteins MinC and MinD at internal division sites while permitting inhibition at polar sites. This ensures cell division at the proper site by restricting the formation of a division septum at the midpoint of the long axis of the cell. This chain is Cell division topological specificity factor, found in Stenotrophomonas maltophilia (strain K279a).